A 210-amino-acid polypeptide reads, in one-letter code: MEKSEATTIDVAETSRESKGKAPLLRDPPAWVPAAVERQRAAPAYKRGVAIFDLILRISAATAALAATITMGTTEQTLPFFTQFFQFQASYDDLPTFTFFVIAMSIVTGYLVLSVPFSIVCIARPVAAAPRLLLILCDTLAVTLNTSAAGASAAIVYLAHNGNSDANWLAICQQFNDFCQRTSGAVVASFVAVVLLIFLVVLSASALKKH.

A disordered region spans residues 1 to 25 (MEKSEATTIDVAETSRESKGKAPLL). Residues 1–48 (MEKSEATTIDVAETSRESKGKAPLLRDPPAWVPAAVERQRAAPAYKRG) lie on the Cytoplasmic side of the membrane. A helical membrane pass occupies residues 49 to 69 (VAIFDLILRISAATAALAATI). Residues 70–98 (TMGTTEQTLPFFTQFFQFQASYDDLPTFT) are Extracellular-facing. The helical transmembrane segment at 99-119 (FFVIAMSIVTGYLVLSVPFSI) threads the bilayer. Residues 120-138 (VCIARPVAAAPRLLLILCD) lie on the Cytoplasmic side of the membrane. The helical transmembrane segment at 139–159 (TLAVTLNTSAAGASAAIVYLA) threads the bilayer. At 160–183 (HNGNSDANWLAICQQFNDFCQRTS) the chain is on the extracellular side. A helical transmembrane segment spans residues 184–204 (GAVVASFVAVVLLIFLVVLSA). Topologically, residues 205 to 210 (SALKKH) are cytoplasmic.

It belongs to the Casparian strip membrane proteins (CASP) family. As to quaternary structure, homodimer and heterodimers.

It localises to the cell membrane. Its function is as follows. Regulates membrane-cell wall junctions and localized cell wall deposition. Required for establishment of the Casparian strip membrane domain (CSD) and the subsequent formation of Casparian strips, a cell wall modification of the root endodermis that determines an apoplastic barrier between the intraorganismal apoplasm and the extraorganismal apoplasm and prevents lateral diffusion. The sequence is that of Casparian strip membrane protein 1 from Erythranthe guttata (Yellow monkey flower).